The sequence spans 41 residues: Photosystem I reaction center subunit IX (41 aa).

The helical transmembrane segment at 7–27 threads the bilayer; that stretch reads YLSSAPILATIWFAITAGILI.

This sequence belongs to the PsaJ family.

It localises to the cellular thylakoid membrane. Its function is as follows. May help in the organization of the PsaE and PsaF subunits. The chain is Photosystem I reaction center subunit IX from Synechococcus sp. (strain ATCC 27144 / PCC 6301 / SAUG 1402/1) (Anacystis nidulans).